Here is a 418-residue protein sequence, read N- to C-terminus: UDP-N-acetylglucosamine 1-carboxyvinyltransferase (418 aa).

Position 22-23 (22-23 (KN)) interacts with phosphoenolpyruvate. R92 is a binding site for UDP-N-acetyl-alpha-D-glucosamine. C116 (proton donor) is an active-site residue. C116 bears the 2-(S-cysteinyl)pyruvic acid O-phosphothioketal mark. Residues 121-125 (RPVDQ), D306, and I328 each bind UDP-N-acetyl-alpha-D-glucosamine.

This sequence belongs to the EPSP synthase family. MurA subfamily.

It is found in the cytoplasm. The catalysed reaction is phosphoenolpyruvate + UDP-N-acetyl-alpha-D-glucosamine = UDP-N-acetyl-3-O-(1-carboxyvinyl)-alpha-D-glucosamine + phosphate. Its pathway is cell wall biogenesis; peptidoglycan biosynthesis. Its function is as follows. Cell wall formation. Adds enolpyruvyl to UDP-N-acetylglucosamine. The protein is UDP-N-acetylglucosamine 1-carboxyvinyltransferase of Acinetobacter baylyi (strain ATCC 33305 / BD413 / ADP1).